Here is a 1437-residue protein sequence, read N- to C-terminus: DNA polymerase III PolC-type (1437 aa).

Positions 420–576 (YVIFDVETTG…YDSETTGHLC (157 aa)) constitute an Exonuclease domain.

The protein belongs to the DNA polymerase type-C family. PolC subfamily.

Its subcellular location is the cytoplasm. The enzyme catalyses DNA(n) + a 2'-deoxyribonucleoside 5'-triphosphate = DNA(n+1) + diphosphate. Required for replicative DNA synthesis. This DNA polymerase also exhibits 3' to 5' exonuclease activity. This Pediococcus pentosaceus (strain ATCC 25745 / CCUG 21536 / LMG 10740 / 183-1w) protein is DNA polymerase III PolC-type.